A 263-amino-acid chain; its full sequence is Non-functional protein STAY-GREEN, chloroplastic (263 aa).

The N-terminal 54 residues, 1 to 54, are a transit peptide targeting the chloroplast; it reads MDTLTSAPLLTSKFKPSFSPQQKPCFPHRRRFENGKKKQSIVPVARLFGPAIFE.

This sequence belongs to the staygreen family.

It is found in the plastid. The protein resides in the chloroplast. Functionally, non-functional protein probably interfering with the disassembling mechanism of the intact light-harvesting complex of photosystem II (LHCII) in the thylakoid membranes. Responsible for a stay-green phenotype. The polypeptide is Non-functional protein STAY-GREEN, chloroplastic (SGR) (Pisum sativum (Garden pea)).